We begin with the raw amino-acid sequence, 302 residues long: 4-diphosphocytidyl-2-C-methyl-D-erythritol kinase (302 aa).

Lys-13 is an active-site residue. Position 101-111 (101-111 (PVASGIGGGSS)) interacts with ATP. Asp-143 is an active-site residue.

It belongs to the GHMP kinase family. IspE subfamily.

It carries out the reaction 4-CDP-2-C-methyl-D-erythritol + ATP = 4-CDP-2-C-methyl-D-erythritol 2-phosphate + ADP + H(+). It participates in isoprenoid biosynthesis; isopentenyl diphosphate biosynthesis via DXP pathway; isopentenyl diphosphate from 1-deoxy-D-xylulose 5-phosphate: step 3/6. Functionally, catalyzes the phosphorylation of the position 2 hydroxy group of 4-diphosphocytidyl-2C-methyl-D-erythritol. The chain is 4-diphosphocytidyl-2-C-methyl-D-erythritol kinase from Granulibacter bethesdensis (strain ATCC BAA-1260 / CGDNIH1).